The primary structure comprises 507 residues: Probable bifunctional methylthioribulose-1-phosphate dehydratase/enolase-phosphatase E1 (507 aa).

At Ala2 the chain carries N-acetylalanine. Positions Ala2 to Asp237 are methylthioribulose-1-phosphate dehydratase. Cys109 contributes to the substrate binding site. His127 and His129 together coordinate Zn(2+). Residue Glu152 is the Proton donor/acceptor of the active site. Residue His202 coordinates Zn(2+). Residues Ile268–Ile507 are enolase-phosphatase E1. Mg(2+) contacts are provided by Asp271 and Glu273. Substrate-binding positions include Ser406–Ser407 and Lys440. Asp466 is a Mg(2+) binding site.

This sequence in the N-terminal section; belongs to the aldolase class II family. MtnB subfamily. In the C-terminal section; belongs to the HAD-like hydrolase superfamily. MasA/MtnC family. Zn(2+) is required as a cofactor. It depends on Mg(2+) as a cofactor.

It carries out the reaction 5-(methylsulfanyl)-D-ribulose 1-phosphate = 5-methylsulfanyl-2,3-dioxopentyl phosphate + H2O. The catalysed reaction is 5-methylsulfanyl-2,3-dioxopentyl phosphate + H2O = 1,2-dihydroxy-5-(methylsulfanyl)pent-1-en-3-one + phosphate. It functions in the pathway amino-acid biosynthesis; L-methionine biosynthesis via salvage pathway; L-methionine from S-methyl-5-thio-alpha-D-ribose 1-phosphate: step 2/6. The protein operates within amino-acid biosynthesis; L-methionine biosynthesis via salvage pathway; L-methionine from S-methyl-5-thio-alpha-D-ribose 1-phosphate: step 3/6. Its pathway is amino-acid biosynthesis; L-methionine biosynthesis via salvage pathway; L-methionine from S-methyl-5-thio-alpha-D-ribose 1-phosphate: step 4/6. This chain is Probable bifunctional methylthioribulose-1-phosphate dehydratase/enolase-phosphatase E1, found in Arabidopsis thaliana (Mouse-ear cress).